A 502-amino-acid polypeptide reads, in one-letter code: RxLR effector protein BLN06 (502 aa).

The signal sequence occupies residues Met-1 to Ala-20. Asn-38 carries N-linked (GlcNAc...) asparagine glycosylation. The short motif at Leu-50–Arg-53 is the dEER element.

This sequence belongs to the RxLR effector family.

The protein resides in the secreted. It is found in the host cell membrane. Secreted effector that triggers a robust hypersensitive response (HR) in Lactuca serriola LS102. The response to BLN06 was visible as chlorosis but not as strong necrosis. The sequence is that of RxLR effector protein BLN06 from Bremia lactucae (Lettuce downy mildew).